Consider the following 385-residue polypeptide: Chaperone protein DnaJ (385 aa).

The J domain occupies 5–70 (DYYEILEITR…SKRQIYDKYG (66 aa)). The segment at 136 to 213 (GCKKEIHNSF…CKGSGFEISE (78 aa)) adopts a CR-type zinc-finger fold. The Zn(2+) site is built by Cys-149, Cys-152, Cys-165, Cys-168, Cys-187, Cys-190, Cys-201, and Cys-204. 4 CXXCXGXG motif repeats span residues 149-156 (CSDCKGTG), 165-172 (CKDCGGKG), 187-194 (CPTCKGEG), and 201-208 (CSKCKGSG).

This sequence belongs to the DnaJ family. As to quaternary structure, homodimer. Requires Zn(2+) as cofactor.

The protein resides in the cytoplasm. Functionally, participates actively in the response to hyperosmotic and heat shock by preventing the aggregation of stress-denatured proteins and by disaggregating proteins, also in an autonomous, DnaK-independent fashion. Unfolded proteins bind initially to DnaJ; upon interaction with the DnaJ-bound protein, DnaK hydrolyzes its bound ATP, resulting in the formation of a stable complex. GrpE releases ADP from DnaK; ATP binding to DnaK triggers the release of the substrate protein, thus completing the reaction cycle. Several rounds of ATP-dependent interactions between DnaJ, DnaK and GrpE are required for fully efficient folding. Also involved, together with DnaK and GrpE, in the DNA replication of plasmids through activation of initiation proteins. This Helicobacter hepaticus (strain ATCC 51449 / 3B1) protein is Chaperone protein DnaJ.